The following is a 369-amino-acid chain: MSRLLGGTLERVCKAVLLLCLLHFLVAVILYFDVYAQHLAFFSRFSTRSPAHALYPAASSSTNCSRPNATAASSGLPEVPSARPGPTAPVIPPCPDVPPGLVGRVVIEFTSPMPLERVQRENPGVLLGGRYSPPDCTPAQTVAVIIPFRHREHHLRYWLHYLHPMLRRQRLRYGVYVINQHGEETFNRAKLLNVGFLEALKEDAAYDCFIFSDVDLVPMDDRNLYRCGDQPRHFAIAMDKFGFRLPYASYFGGVSGLSKAQFLRINGFPNEYWGWGGEDDDIFNRISLTGMKISRPDVRIGRYRMIKHDRDKHNEPNPQRFNKIQNTKMSMKWDGIGSVRYRVLEVSRQPLFTNITVDIGQPMSWLTQG.

Over 1-15 (MSRLLGGTLERVCKA) the chain is Cytoplasmic. The chain crosses the membrane as a helical; Signal-anchor for type II membrane protein span at residues 16-36 (VLLLCLLHFLVAVILYFDVYA). Residues 37–369 (QHLAFFSRFS…GQPMSWLTQG (333 aa)) are Lumenal-facing. Residues 58–73 (ASSSTNCSRPNATAAS) are compositionally biased toward polar residues. Positions 58–90 (ASSSTNCSRPNATAASSGLPEVPSARPGPTAPV) are disordered. N-linked (GlcNAc...) asparagine glycosylation is found at N63 and N68. A disulfide bridge connects residues C94 and C136. UDP-alpha-D-galactose-binding positions include 147–151 (PFRHR), 186–188 (FNR), 214–215 (VD), and W275. C208 and C227 are oxidised to a cystine. D215 contributes to the Mn(2+) binding site. 277–280 (GEDD) serves as a coordination point for N-acetyl-D-glucosamine. H308 is a binding site for Mn(2+). 308–310 (HDR) contributes to the UDP-alpha-D-galactose binding site. R320 lines the N-acetyl-D-glucosamine pocket. N-linked (GlcNAc...) asparagine glycosylation is present at N354.

Belongs to the glycosyltransferase 7 family. Requires Mn(2+) as cofactor.

Its subcellular location is the golgi apparatus. The protein resides in the golgi stack membrane. It carries out the reaction D-glucose + UDP-alpha-D-galactose = lactose + UDP + H(+). The enzyme catalyses an N-acetyl-beta-D-glucosaminyl derivative + UDP-alpha-D-galactose = a beta-D-galactosyl-(1-&gt;4)-N-acetyl-beta-D-glucosaminyl derivative + UDP + H(+). The catalysed reaction is N-acetyl-D-glucosamine + UDP-alpha-D-galactose = beta-D-galactosyl-(1-&gt;4)-N-acetyl-D-glucosamine + UDP + H(+). It participates in protein modification; protein glycosylation. Its function is as follows. Responsible for the synthesis of complex-type N-linked oligosaccharides in many glycoproteins as well as the carbohydrate moieties of glycolipids. Can produce lactose. This is Beta-1,4-galactosyltransferase 2 from Mus musculus (Mouse).